The chain runs to 179 residues: Large ribosomal subunit protein uL6 (179 aa).

Belongs to the universal ribosomal protein uL6 family. In terms of assembly, part of the 50S ribosomal subunit.

Its function is as follows. This protein binds to the 23S rRNA, and is important in its secondary structure. It is located near the subunit interface in the base of the L7/L12 stalk, and near the tRNA binding site of the peptidyltransferase center. This Prochlorococcus marinus (strain MIT 9211) protein is Large ribosomal subunit protein uL6.